The sequence spans 940 residues: Acetyl-coenzyme A synthetase (940 aa).

Residues 1 to 33 form the signal peptide; the sequence is MCCAIWSASRAPACSASQLSSSHAVRPSVVPDA. Positions 1–289 are unknown; the sequence is MCCAIWSASR…VQRSVTRLTA (289 aa). 3 disordered regions span residues 70 to 127, 157 to 202, and 224 to 274; these read TARA…RPRC, VAPP…ADSA, and ASSQ…QQTC. Polar residues-rich tracts occupy residues 72-95 and 107-120; these read RATT…TAAS and SSIS…TSGS. Composition is skewed to low complexity over residues 184 to 202 and 224 to 245; these read TAPP…ADSA and ASSQ…SGRS. Polar residues predominate over residues 258 to 274; that stretch reads SSPTVQRNQTTVHQQTC. Positions 290–940 are acetyl-coenzyme A synthetase; the sequence is MSNPSHAEVP…SVFEAIRASK (651 aa). CoA-binding positions include 480-483 and Thr599; that span reads RRGK. Residues 675–677, 699–704, Asp796, and Arg811 each bind ATP; these read GEP and DTWWQT. A CoA-binding site is contributed by Ser819. ATP is bound at residue Arg822. Residues Val833, His835, and Val838 each coordinate Mg(2+). N6-acetyllysine is present on Lys906.

Belongs to the ATP-dependent AMP-binding enzyme family. Mg(2+) is required as a cofactor. Acetylated on Lys-906 by Pat in the presence of acetyl-CoA as an acetyl donor and ATP. Acetylation results in the inactivation of the enzyme. Deacetylation by the SIR2-homolog deacetylase CobB is required to activate the enzyme.

The enzyme catalyses acetate + ATP + CoA = acetyl-CoA + AMP + diphosphate. Functionally, catalyzes the conversion of acetate into acetyl-CoA (AcCoA), an essential intermediate at the junction of anabolic and catabolic pathways. AcsA undergoes a two-step reaction. In the first half reaction, AcsA combines acetate with ATP to form acetyl-adenylate (AcAMP) intermediate. In the second half reaction, it can then transfer the acetyl group from AcAMP to the sulfhydryl group of CoA, forming the product AcCoA. This chain is Acetyl-coenzyme A synthetase (acsA), found in Mycolicibacterium smegmatis (strain ATCC 700084 / mc(2)155) (Mycobacterium smegmatis).